The chain runs to 489 residues: Rhamnulokinase (489 aa).

13–17 (ASSGR) contacts ATP. An intrachain disulfide couples cysteine 68 to cysteine 222. Residues glycine 83 and 236–238 (HDT) contribute to the substrate site. Residue aspartate 237 is the Proton acceptor of the active site. Threonine 259 is a binding site for ATP. Asparagine 296 lines the substrate pocket. Glutamine 304 lines the ATP pocket. Cysteine 353 and cysteine 370 are joined by a disulfide. Glycine 402 provides a ligand contact to ATP. Residues cysteine 413 and cysteine 417 are joined by a disulfide bond.

The protein belongs to the rhamnulokinase family. Monomer. Mg(2+) is required as a cofactor.

It catalyses the reaction L-rhamnulose + ATP = L-rhamnulose 1-phosphate + ADP + H(+). It functions in the pathway carbohydrate degradation; L-rhamnose degradation; glycerone phosphate from L-rhamnose: step 2/3. Involved in the catabolism of L-rhamnose (6-deoxy-L-mannose). Catalyzes the transfer of the gamma-phosphate group from ATP to the 1-hydroxyl group of L-rhamnulose to yield L-rhamnulose 1-phosphate. In Escherichia coli O1:K1 / APEC, this protein is Rhamnulokinase.